Here is a 201-residue protein sequence, read N- to C-terminus: MTPEAFAADVPVSRETVERLEAYLAVLEKWQRRINLVGKTTLDDPWRRHFLDSAQLLALLPTPTRVLLDLGSGAGFPGLVLAILGVPEVHLVEADGRKSAFLIEAARITNTRIVLHTLRLEALPVFPVDVVTARAFAPLARILEGAAPFLLAGAQGVFLKGQSVDDELTEAQSQWTMSVERFASRSDPTGHILRIGEIHRA.

S-adenosyl-L-methionine is bound by residues Gly71, Phe76, 120–121 (LE), and Arg134.

It belongs to the methyltransferase superfamily. RNA methyltransferase RsmG family.

It localises to the cytoplasm. It carries out the reaction guanosine(527) in 16S rRNA + S-adenosyl-L-methionine = N(7)-methylguanosine(527) in 16S rRNA + S-adenosyl-L-homocysteine. In terms of biological role, specifically methylates the N7 position of guanine in position 527 of 16S rRNA. This Rhodospirillum rubrum (strain ATCC 11170 / ATH 1.1.1 / DSM 467 / LMG 4362 / NCIMB 8255 / S1) protein is Ribosomal RNA small subunit methyltransferase G.